The following is a 652-amino-acid chain: Nitrate reductase-like protein NarX (652 aa).

The interval 1-251 is nitrate reductase alpha subunit; it reads MTVTPRTGSR…FGDQTDVPES (251 aa). Residues 53–117 enclose the 4Fe-4S Mo/W bis-MGD-type domain; the sequence is DKVVRSTHGV…AFSWYTYSPT (65 aa). [4Fe-4S] cluster contacts are provided by histidine 60, cysteine 64, cysteine 68, and cysteine 103. Aspartate 233 is a binding site for Mo-bis(molybdopterin guanine dinucleotide). The tract at residues 258-415 is nitrate reductase delta subunit; sequence VWQCASVLLT…TVAAVCRTGD (158 aa). A run of 5 helical transmembrane segments spans residues 416–436, 466–486, 504–524, 545–565, and 595–615; these read MMGE…VAVG, PMFH…LVIP, AVVL…LLIY, LVLV…SGVV, and APLY…LWPF. Residues 416–652 are nitrate reductase gamma subunit; that stretch reads MMGELFWTVV…VLTRPRRRGW (237 aa). Positions 469 and 479 each coordinate heme b. Histidine 602 and histidine 620 together coordinate heme b.

This sequence in the N-terminal section; belongs to the nitrate reductase alpha subunit family. It in the central section; belongs to the NarJ/NarW family. In the C-terminal section; belongs to the nitrate reductase gamma subunit family. [4Fe-4S] cluster is required as a cofactor. The cofactor is Mo-bis(molybdopterin guanine dinucleotide). Heme b serves as cofactor.

The protein resides in the cell membrane. Does not seem to have nitrate reductase activity. The chain is Nitrate reductase-like protein NarX (narX) from Mycobacterium tuberculosis (strain CDC 1551 / Oshkosh).